The sequence spans 692 residues: MSYTPMSDLGQQGLFDITRTLLQQPDLASLSEALSQLVKRSALADSAGIVLWQAQSQRAQYYATRENGRPVEYEDETVLAHGPVRRILSRPDALHCNFHEFTETWPQLAASGLYPEFGHYCLLPLAAEGRIFGGCEFIRQEDRPWSEKEYDRLHTFTQIVGVVAEQIQNRVNNNVDYDLLCRERDNFRILVAITNAVLSRLDIDELVSEVAKEIHHYFNIDAISIVLRSHRKNKLNIYSTHYLDEHHPAHEQSEVDEAGTLTERVFKSKEMLLINLNERDPLAPYERMLFDTWGNQIQTLCLLPLMSGKTMLGVLKLAQCEEKVFTTANLKLLRQIAERVAIAVDNALAYQEIHRLKERLVDENLALTEQLNNVDSEFGEIIGRSEAMYNVLKQVEMVAQSDSTVLILGETGTGKELIARAIHNLSGRSGRRMVKMNCAAMPAGLLESDLFGHERGAFTGASAQRIGRFELADKSSLFLDEVGDMPLELQPKLLRVLQEQEFERLGSNKLIQTDVRLIAATNRDLKKMVADREFRNDLYYRLNVFPIQLPPLRERPEDIPLLVKAFTFKIARRMGRNIDSIPAETLRTLSSMEWPGNVRELENVVERAVLLTRGNVLQLSLPDITAVTPDTSPVATESDKEGEDEYQLIIRVLKETNGVVAGPKGAAQRLGLKRTTLLSRMKRLGIDKDALA.

The GAF domain maps to 202 to 344 (DIDELVSEVA…QIAERVAIAV (143 aa)). The 230-residue stretch at 381 to 610 (IIGRSEAMYN…LENVVERAVL (230 aa)) folds into the Sigma-54 factor interaction domain. ATP-binding positions include 409–416 (GETGTGKE) and 472–481 (ADKSSLFLDE). A DNA-binding region (H-T-H motif) is located at residues 663 to 682 (PKGAAQRLGLKRTTLLSRMK).

Functionally, required for induction of expression of the formate dehydrogenase H and hydrogenase-3 structural genes. In Salmonella typhimurium (strain LT2 / SGSC1412 / ATCC 700720), this protein is Formate hydrogenlyase transcriptional activator (fhlA).